The following is a 973-amino-acid chain: Piwi-like protein 2 (973 aa).

Residues 28-65 (WPQASKPLDPALGRGAPAGRGHVFGKPEEPSTQRGPAQ) form a disordered region. Low complexity predominate over residues 34 to 48 (PLDPALGRGAPAGRG). At Arg-47 the chain carries Symmetric dimethylarginine. Residues Arg-76 and Arg-97 each carry the omega-N-methylarginine; by PRMT5; alternate modification. Arg-76 carries the symmetric dimethylarginine; by PRMT5; alternate modification. Position 97 is a symmetric dimethylarginine; alternate (Arg-97). At Arg-102 the chain carries Symmetric dimethylarginine; by PRMT5; alternate. An Omega-N-methylarginine; alternate modification is found at Arg-102. A symmetric dimethylarginine mark is found at Arg-146 and Arg-158. Residues 162 to 199 (GISREVDKPPCTFSTPSRGPPQLSSPPALPQSPLHSPD) are disordered. Arg-165 bears the Symmetric dimethylarginine; by PRMT5 mark. One can recognise a PAZ domain in the interval 389-502 (CVLDVMHAIY…LLPELSFMTG (114 aa)). Arg-551 is modified (symmetric dimethylarginine; by PRMT5). A Piwi domain is found at 668-959 (MVVCIIMGPR…LAFLSGHILH (292 aa)). Active-site residues include Asp-745, Glu-783, Asp-815, and His-948.

It belongs to the argonaute family. Piwi subfamily. In terms of assembly, interacts with DDX4, MAEL, EIF3A, EIF4E, EIF4G, PRMT5 and WDR77. Associates with EIF4E- and EIF4G-containing m7G cap-binding complexes. Interacts (when methylated on arginine residues) with TDRD1 and TDRKH/TDRD2. Interacts with TDRD12. Component of the PET complex, at least composed of EXD1, PIWIL2, TDRD12 and piRNAs. Interacts with MOV10L1. Interacts with GPAT2. Interacts with TEX19. Interacts with GSK3B. Interacts (via PIWI domain) with BMAL1 and CLOCK. Interacts with TEX15. Mg(2+) serves as cofactor. In terms of processing, arginine methylation by PRMT5 is required for the interaction with Tudor domain-containing protein TDRD1 and subsequent localization to the meiotic nuage, also named P granule. As to expression, expressed in adult testis and in most tumors.

It is found in the cytoplasm. Its function is as follows. Endoribonuclease that plays a central role during spermatogenesis by repressing transposable elements and preventing their mobilization, which is essential for the germline integrity. Plays an essential role in meiotic differentiation of spermatocytes, germ cell differentiation and in self-renewal of spermatogonial stem cells. Acts via the piRNA metabolic process, which mediates the repression of transposable elements during meiosis by forming complexes composed of piRNAs and Piwi proteins and govern the methylation and subsequent repression of transposons. During piRNA biosynthesis, plays a key role in the piRNA amplification loop, also named ping-pong amplification cycle, by acting as a 'slicer-competent' piRNA endoribonuclease that cleaves primary piRNAs, which are then loaded onto 'slicer-incompetent' PIWIL4. PIWIL2 slicing produces a pre-miRNA intermediate, which is then processed in mature piRNAs, and as well as a 16 nucleotide by-product that is degraded. Required for PIWIL4/MIWI2 nuclear localization and association with secondary piRNAs antisense. Besides their function in transposable elements repression, piRNAs are probably involved in other processes during meiosis such as translation regulation. Indirectly modulates expression of genes such as PDGFRB, SLC2A1, ITGA6, GJA7, THY1, CD9 and STRA8. When overexpressed, acts as an oncogene by inhibition of apoptosis and promotion of proliferation in tumors. Represses circadian rhythms by promoting the stability and activity of core clock components BMAL1 and CLOCK by inhibiting GSK3B-mediated phosphorylation and ubiquitination-dependent degradation of these proteins. This chain is Piwi-like protein 2 (PIWIL2), found in Homo sapiens (Human).